Reading from the N-terminus, the 52-residue chain is Protein RepA (52 aa).

Positions 20–40 form a DNA-binding region, H-T-H motif; the sequence is KLEELAQKYGMTKSGLVNFLV.

It belongs to the transcriptional regulatory CopG/NikR family. Homodimer.

Functionally, regulates the plasmid copy number. RepA binds to the repAB promoter thus controlling the synthesis of the plasmid replication initiator protein RepB. In Lactiplantibacillus plantarum (Lactobacillus plantarum), this protein is Protein RepA (repA).